A 420-amino-acid polypeptide reads, in one-letter code: Glucose-1-phosphate adenylyltransferase (420 aa).

Residues Tyr-97, Gly-162, 177 to 178 (EK), and Ser-188 each bind alpha-D-glucose 1-phosphate.

It belongs to the bacterial/plant glucose-1-phosphate adenylyltransferase family. As to quaternary structure, homotetramer.

The catalysed reaction is alpha-D-glucose 1-phosphate + ATP + H(+) = ADP-alpha-D-glucose + diphosphate. It participates in glycan biosynthesis; glycogen biosynthesis. In terms of biological role, involved in the biosynthesis of ADP-glucose, a building block required for the elongation reactions to produce glycogen. Catalyzes the reaction between ATP and alpha-D-glucose 1-phosphate (G1P) to produce pyrophosphate and ADP-Glc. The chain is Glucose-1-phosphate adenylyltransferase from Pseudothermotoga lettingae (strain ATCC BAA-301 / DSM 14385 / NBRC 107922 / TMO) (Thermotoga lettingae).